Reading from the N-terminus, the 593-residue chain is Kelch-like protein 2 (593 aa).

Residues 1–29 (MESPPLPPACTKQGHQKPLDSKDENPEKH) form a disordered region. A compositionally biased stretch (basic and acidic residues) spans 17–29 (KPLDSKDENPEKH). In terms of domain architecture, BTB spans 56–123 (CDVTIVAEDM…VYTAEIQVTE (68 aa)). 6 Kelch repeats span residues 308–353 (LMVV…YMAG), 354–400 (LVFA…VLNG), 402–447 (LYAV…VVGG), 449–496 (LYAV…VLNN), 497–543 (LLYA…AVNG), and 545–591 (LYVV…VIDK).

As to quaternary structure, component of the BCR(KLHL2) E3 ubiquitin ligase complex, at least composed of CUL3 and KLHL2 and RBX1. Binds actin. Interacts with KLHL12. Interacts (via N-terminus) with FYN (via SH3 domain). In terms of tissue distribution, detected in brain neurons, oligodendrocytes and astrocytes (at protein level).

It localises to the cytoplasm. The protein resides in the cytoskeleton. The protein localises to the cell projection. Its subcellular location is the ruffle. It is found in the lamellipodium. It localises to the cytosol. The protein operates within protein modification; protein ubiquitination. Functionally, substrate-specific adapter of a BCR (BTB-CUL3-RBX1) E3 ubiquitin ligase complex that mediates the ubiquitination of target proteins, such as NPTXR, WNK1, WNK3 and WNK4, leading most often to their proteasomal degradation. The BCR(KLHL2) complex catalyzes ubiquitination and degradation of NPTXR. Responsible for degradative ubiquitination of the WNK kinases WNK1, WNK3 and WNK4. Plays a role in the reorganization of the actin cytoskeleton. Promotes growth of cell projections in oligodendrocyte precursors. The protein is Kelch-like protein 2 of Rattus norvegicus (Rat).